The sequence spans 413 residues: Glucose-1-phosphate adenylyltransferase (413 aa).

Alpha-D-glucose 1-phosphate contacts are provided by residues tyrosine 102, glycine 167, 182 to 183 (EK), and serine 200.

It belongs to the bacterial/plant glucose-1-phosphate adenylyltransferase family. As to quaternary structure, homotetramer.

It catalyses the reaction alpha-D-glucose 1-phosphate + ATP + H(+) = ADP-alpha-D-glucose + diphosphate. Its pathway is glycan biosynthesis; glycogen biosynthesis. Involved in the biosynthesis of ADP-glucose, a building block required for the elongation reactions to produce glycogen. Catalyzes the reaction between ATP and alpha-D-glucose 1-phosphate (G1P) to produce pyrophosphate and ADP-Glc. The sequence is that of Glucose-1-phosphate adenylyltransferase from Deinococcus radiodurans (strain ATCC 13939 / DSM 20539 / JCM 16871 / CCUG 27074 / LMG 4051 / NBRC 15346 / NCIMB 9279 / VKM B-1422 / R1).